The primary structure comprises 76 residues: ATP synthase subunit 9, mitochondrial (76 aa).

2 helical membrane passes run 14–34 (ISTIGLIGAGIGIGIVFAALI) and 56–76 (ALSEATGLFCLMISFMLLFAV).

It belongs to the ATPase C chain family. As to quaternary structure, F-type ATPases have 2 components, CF(1) - the catalytic core - and CF(0) - the membrane proton channel. CF(1) has five subunits: alpha(3), beta(3), gamma(1), delta(1), epsilon(1). CF(0) has three main subunits: a, b and c.

It localises to the mitochondrion membrane. Its function is as follows. Mitochondrial membrane ATP synthase (F(1)F(0) ATP synthase or Complex V) produces ATP from ADP in the presence of a proton gradient across the membrane which is generated by electron transport complexes of the respiratory chain. F-type ATPases consist of two structural domains, F(1) - containing the extramembraneous catalytic core and F(0) - containing the membrane proton channel, linked together by a central stalk and a peripheral stalk. During catalysis, ATP synthesis in the catalytic domain of F(1) is coupled via a rotary mechanism of the central stalk subunits to proton translocation. Part of the complex F(0) domain. A homomeric c-ring of probably 10 subunits is part of the complex rotary element. In Candida glabrata (strain ATCC 2001 / BCRC 20586 / JCM 3761 / NBRC 0622 / NRRL Y-65 / CBS 138) (Yeast), this protein is ATP synthase subunit 9, mitochondrial (ATP9).